The primary structure comprises 354 residues: AT-hook motif nuclear-localized protein 11 (354 aa).

2 disordered regions span residues 1 to 158 (MDRR…MMPS) and 290 to 354 (KREE…LMRG). 2 stretches are compositionally biased toward low complexity: residues 46 to 55 (NSISPFGSNP) and 75 to 96 (VDSSPADSSAAAAGALVAPPSG). The Bipartite nuclear localization signal signature appears at 101-109 (KRKRGRPRK). Positions 101-113 (KRKRGRPRKYGQD) form a DNA-binding region, a.T hook 1. The span at 122-133 (SPSISNVSPNSN) shows a compositional bias: low complexity. The segment at residues 134-146 (KRGRGRPPGSGKK) is a DNA-binding region (a.T hook 2). The PPC domain maps to 159 to 302 (STGMSFTPHV…ETSEDVQDTD (144 aa)). Positions 294–303 (TSEDVQDTDA) are enriched in acidic residues. Residues 304-327 (LENNNDNTAATSPPVPQQSQNIVQ) show a composition bias toward polar residues. The span at 340-354 (MDMHHPHMDIDLMRG) shows a compositional bias: basic and acidic residues.

Its subcellular location is the nucleus. Transcription factor that specifically binds AT-rich DNA sequences related to the nuclear matrix attachment regions (MARs). The polypeptide is AT-hook motif nuclear-localized protein 11 (Arabidopsis thaliana (Mouse-ear cress)).